Here is a 114-residue protein sequence, read N- to C-terminus: Protein Tat (114 aa).

The segment at 1 to 24 (MDPVDPEVPPWHHPGSQPQIPCNN) is interaction with human CREBBP. The segment at 1–48 (MDPVDPEVPPWHHPGSQPQIPCNNCYCKRCCYHCYVCFVRKGLGISYG) is transactivation. Positions 22, 25, and 27 each coordinate Zn(2+). Positions 22–37 (CNNCYCKRCCYHCYVC) are cysteine-rich. Lysine 28 bears the N6-acetyllysine; by host PCAF mark. Zn(2+) contacts are provided by cysteine 30, histidine 33, cysteine 34, and cysteine 37. Residues 38-48 (FVRKGLGISYG) are core. The segment at 48 to 114 (GRKKRGRPAA…CHCCTRTSEQ (67 aa)) is disordered. The Nuclear localization signal, RNA-binding (TAR), and protein transduction motif lies at 49–56 (RKKRGRPA). Positions 49-84 (RKKRGRPAAASHPDHKDPVPKQSPTITKRKQERQEE) are interaction with the host capping enzyme RNGTT. Lysine 50 and lysine 51 each carry N6-acetyllysine; by host EP300 and GCN5L2. Asymmetric dimethylarginine; by host PRMT6 is present on arginine 52. Lysine 69 is covalently cross-linked (Glycyl lysine isopeptide (Lys-Gly) (interchain with G-Cter in ubiquitin)).

Belongs to the lentiviruses Tat family. As to quaternary structure, interacts with host CCNT1. Associates with the P-TEFb complex composed at least of Tat, P-TEFb (CDK9 and CCNT1), TAR RNA, RNA Pol II. Recruits the HATs CREBBP, TAF1/TFIID, EP300, PCAF and GCN5L2. Interacts with host KAT5/Tip60; this interaction targets the latter to degradation. Interacts with the host deacetylase SIRT1. Interacts with host capping enzyme RNGTT; this interaction stimulates RNGTT. Binds to host KDR, and to the host integrins ITGAV/ITGB3 and ITGA5/ITGB1. Interacts with host KPNB1/importin beta-1 without previous binding to KPNA1/importin alpha-1. Interacts with EIF2AK2. Interacts with host nucleosome assembly protein NAP1L1; this interaction may be required for the transport of Tat within the nucleus, since the two proteins interact at the nuclear rim. Interacts with host C1QBP/SF2P32; this interaction involves lysine-acetylated Tat. Interacts with the host chemokine receptors CCR2, CCR3 and CXCR4. Interacts with host DPP4/CD26; this interaction may trigger an anti-proliferative effect. Interacts with host LDLR. Interacts with the host extracellular matrix metalloproteinase MMP1. Interacts with host PRMT6; this interaction mediates Tat's methylation. Interacts with, and is ubiquitinated by MDM2/Hdm2. Interacts with host PSMC3 and HTATIP2. Interacts with STAB1; this interaction may overcome SATB1-mediated repression of IL2 and IL2RA (interleukin) in T cells by binding to the same domain than HDAC1. Interacts (when acetylated) with human CDK13, thereby increasing HIV-1 mRNA splicing and promoting the production of the doubly spliced HIV-1 protein Nef. Interacts with host TBP; this interaction modulates the activity of transcriptional pre-initiation complex. Interacts with host RELA. Interacts with host PLSCR1; this interaction negatively regulates Tat transactivation activity by altering its subcellular distribution. Asymmetrical arginine methylation by host PRMT6 seems to diminish the transactivation capacity of Tat and affects the interaction with host CCNT1. Post-translationally, acetylation by EP300, CREBBP, GCN5L2/GCN5 and PCAF regulates the transactivation activity of Tat. EP300-mediated acetylation of Lys-50 promotes dissociation of Tat from the TAR RNA through the competitive binding to PCAF's bromodomain. In addition, the non-acetylated Tat's N-terminus can also interact with PCAF. PCAF-mediated acetylation of Lys-28 enhances Tat's binding to CCNT1. Lys-50 is deacetylated by SIRT1. In terms of processing, polyubiquitination by host MDM2 does not target Tat to degradation, but activates its transactivation function and fosters interaction with CCNT1 and TAR RNA. Phosphorylated by EIF2AK2 on serine and threonine residues adjacent to the basic region important for TAR RNA binding and function. Phosphorylation of Tat by EIF2AK2 is dependent on the prior activation of EIF2AK2 by dsRNA.

The protein resides in the host nucleus. Its subcellular location is the host nucleolus. It localises to the host cytoplasm. It is found in the secreted. In terms of biological role, transcriptional activator that increases RNA Pol II processivity, thereby increasing the level of full-length viral transcripts. Recognizes a hairpin structure at the 5'-LTR of the nascent viral mRNAs referred to as the transactivation responsive RNA element (TAR) and recruits the cyclin T1-CDK9 complex (P-TEFb complex) that will in turn hyperphosphorylate the RNA polymerase II to allow efficient elongation. The CDK9 component of P-TEFb and other Tat-activated kinases hyperphosphorylate the C-terminus of RNA Pol II that becomes stabilized and much more processive. Other factors such as HTATSF1/Tat-SF1, SUPT5H/SPT5, and HTATIP2 are also important for Tat's function. Besides its effect on RNA Pol II processivity, Tat induces chromatin remodeling of proviral genes by recruiting the histone acetyltransferases (HATs) CREBBP, EP300 and PCAF to the chromatin. This also contributes to the increase in proviral transcription rate, especially when the provirus integrates in transcriptionally silent region of the host genome. To ensure maximal activation of the LTR, Tat mediates nuclear translocation of NF-kappa-B by interacting with host RELA. Through its interaction with host TBP, Tat may also modulate transcription initiation. Tat can reactivate a latently infected cell by penetrating in it and transactivating its LTR promoter. In the cytoplasm, Tat is thought to act as a translational activator of HIV-1 mRNAs. Extracellular circulating Tat can be endocytosed by surrounding uninfected cells via the binding to several surface receptors such as CD26, CXCR4, heparan sulfate proteoglycans (HSPG) or LDLR. Neurons are rarely infected, but they internalize Tat via their LDLR. Through its interaction with nuclear HATs, Tat is potentially able to control the acetylation-dependent cellular gene expression. Modulates the expression of many cellular genes involved in cell survival, proliferation or in coding for cytokines or cytokine receptors. Tat plays a role in T-cell and neurons apoptosis. Tat induced neurotoxicity and apoptosis probably contribute to neuroAIDS. Circulating Tat also acts as a chemokine-like and/or growth factor-like molecule that binds to specific receptors on the surface of the cells, affecting many cellular pathways. In the vascular system, Tat binds to ITGAV/ITGB3 and ITGA5/ITGB1 integrins dimers at the surface of endothelial cells and competes with bFGF for heparin-binding sites, leading to an excess of soluble bFGF. The protein is Protein Tat of Homo sapiens (Human).